A 139-amino-acid polypeptide reads, in one-letter code: Large ribosomal subunit protein bL20 (139 aa).

It belongs to the bacterial ribosomal protein bL20 family.

In terms of biological role, binds directly to 23S ribosomal RNA and is necessary for the in vitro assembly process of the 50S ribosomal subunit. It is not involved in the protein synthesizing functions of that subunit. The sequence is that of Large ribosomal subunit protein bL20 from Leuconostoc citreum (strain KM20).